We begin with the raw amino-acid sequence, 253 residues long: Triosephosphate isomerase (253 aa).

9 to 11 (NWK) serves as a coordination point for substrate. His97 (electrophile) is an active-site residue. Catalysis depends on Glu169, which acts as the Proton acceptor. Residues Gly175, Ser215, and 236-237 (GG) each bind substrate.

The protein belongs to the triosephosphate isomerase family. In terms of assembly, homodimer.

The protein resides in the cytoplasm. The enzyme catalyses D-glyceraldehyde 3-phosphate = dihydroxyacetone phosphate. Its pathway is carbohydrate biosynthesis; gluconeogenesis. It participates in carbohydrate degradation; glycolysis; D-glyceraldehyde 3-phosphate from glycerone phosphate: step 1/1. Its function is as follows. Involved in the gluconeogenesis. Catalyzes stereospecifically the conversion of dihydroxyacetone phosphate (DHAP) to D-glyceraldehyde-3-phosphate (G3P). This chain is Triosephosphate isomerase, found in Staphylococcus haemolyticus (strain JCSC1435).